The sequence spans 119 residues: Protein SPIRAL1 (119 aa).

Residues 1–11 show a composition bias toward gly residues; sequence MGRGNSCGGGQ. Disordered stretches follow at residues 1–47 and 85–105; these read MGRG…PPVT and EGQNTGNFLTDRPSTKVHAAP. Pro residues predominate over residues 24-34; the sequence is APKPVPAPRPA.

It belongs to the SPIRAL1 family. Ubiquitinated. Upon salt-stress induction, it is subject to proteasome-dependent degradation. In terms of tissue distribution, ubiquitous. High expression was associated with tissues undergoing rapid cell expansion, including the root elongation zone, hypocotyls of dark grown-seedlings, and cotyledons of light-grown seedlings.

It is found in the cytoplasm. The protein localises to the cytoskeleton. Its subcellular location is the phragmoplast. It localises to the spindle. In terms of biological role, required for directional control of cell elongation. Stabilizes growing ends of cortical microtubules and influences their dynamic properties. Acts redundantly with SP1Ls in maintaining the cortical microtubules organization essential for anisotropic cell growth. Plays a key role in salt stress-induced microtubules disassembly. The polypeptide is Protein SPIRAL1 (SPR1) (Arabidopsis thaliana (Mouse-ear cress)).